A 163-amino-acid polypeptide reads, in one-letter code: Putative 4-hydroxy-4-methyl-2-oxoglutarate aldolase (163 aa).

Substrate-binding positions include 76–79 (GDMI) and R98. D99 lines the a divalent metal cation pocket.

It belongs to the class II aldolase/RraA-like family. Homotrimer. It depends on a divalent metal cation as a cofactor.

It catalyses the reaction 4-hydroxy-4-methyl-2-oxoglutarate = 2 pyruvate. The catalysed reaction is oxaloacetate + H(+) = pyruvate + CO2. Catalyzes the aldol cleavage of 4-hydroxy-4-methyl-2-oxoglutarate (HMG) into 2 molecules of pyruvate. Also contains a secondary oxaloacetate (OAA) decarboxylase activity due to the common pyruvate enolate transition state formed following C-C bond cleavage in the retro-aldol and decarboxylation reactions. The sequence is that of Putative 4-hydroxy-4-methyl-2-oxoglutarate aldolase from Pseudomonas fluorescens.